The sequence spans 220 residues: MFQRLSSLFFSTPSPPEDPDCPRAFVSEEDEVDGWLIIDLPDSYAAPPSPGAAPAPAGRPPPAPSLMDESWFVTPPACFTAEGPGLGPARLQSSPLEDLLIEHPSMSVYVTGSTIVLEPGSPSPLPDAALPDGDLSEGELTPARREPRAARHAAPLPARAALLEKAGQVRRLQRARQRAERHALSAKAVQRQNRARESRPRRSKNQSSFIYQPCQRQFNY.

The span at 1 to 12 shows a compositional bias: low complexity; the sequence is MFQRLSSLFFST. Disordered stretches follow at residues 1–24, 41–69, and 119–220; these read MFQR…CPRA, PDSY…LMDE, and PGSP…QFNY. The residue at position 14 (Ser-14) is a Phosphoserine. The LIR motif lies at 26-41; it reads VSEEDEVDGWLIIDLP. Positions 47–64 are enriched in pro residues; sequence PPSPGAAPAPAGRPPPAP. Residue Ser-136 is modified to Phosphoserine. Residues 152–170 show a composition bias toward low complexity; it reads HAAPLPARAALLEKAGQVR. The span at 205–220 shows a compositional bias: polar residues; sequence NQSSFIYQPCQRQFNY.

As to quaternary structure, interacts with VMP1, GABARAP, GABARAPL1, GABARAPL2, MAP1LC3A, MAP1LC3B, MAP1LC3C and THRA.

It is found in the cytoplasm. The protein resides in the cytosol. Its subcellular location is the nucleus. It localises to the PML body. The protein localises to the cytoplasmic vesicle. It is found in the autophagosome. Dual regulator of transcription and autophagy. Positively regulates autophagy and is required for autophagosome formation and processing. May act as a scaffold protein that recruits MAP1LC3A, GABARAP and GABARAPL2 and brings them to the autophagosome membrane by interacting with VMP1 where, in cooperation with the BECN1-PI3-kinase class III complex, they trigger autophagosome development. Acts as a transcriptional activator of THRA. This is Tumor protein p53-inducible nuclear protein 2 (TP53INP2) from Homo sapiens (Human).